The following is a 238-amino-acid chain: Small ribosomal subunit protein uS2 (238 aa).

The protein belongs to the universal ribosomal protein uS2 family.

This Prochlorococcus marinus (strain MIT 9211) protein is Small ribosomal subunit protein uS2.